We begin with the raw amino-acid sequence, 703 residues long: 1,4-alpha-glucan-branching enzyme (703 aa).

Positions 93 and 130 each coordinate (1,4-alpha-D-glucosyl)n. Residue D355 is the Nucleophile of the active site. Residue E415 is the Proton donor of the active site.

Belongs to the glycosyl hydrolase 13 family. GlgB subfamily.

The protein localises to the cytoplasm. The catalysed reaction is Transfers a segment of a (1-&gt;4)-alpha-D-glucan chain to a primary hydroxy group in a similar glucan chain.. It participates in glycan biosynthesis; glycogen biosynthesis. Its function is as follows. Glycogen-branching enzyme participates in the glycogen biosynthetic process along with glycogenin and glycogen synthase. Generates alpha-1,6-glucosidic branches from alpha-1,4-linked glucose chains, to increase solubility of the glycogen polymer. In Eremothecium gossypii (strain ATCC 10895 / CBS 109.51 / FGSC 9923 / NRRL Y-1056) (Yeast), this protein is 1,4-alpha-glucan-branching enzyme (GLC3).